We begin with the raw amino-acid sequence, 865 residues long: MGCAPSIHVSQSGVIYCRDSDESNSPRQTSSVSQGPTAPLHGLFVQTDAADAMPPSRAAGPPGAVRVRRSRAELGSGSSTGSSGPATTTCRGRRRHCCSSAEAETQTSYTSVKVLLIFAKEDSQSDGFWWACDRAGYRCNIARTPESALECFLDKHHEIIVIDHRQSRNFDAEAVCRSIRATNPSEHTVILAVVSQASDDHEEASVLPLLHAGFNRRFMENSSIIACYNELIQIEHGEVRSQFKLRACNSVFTALDHCHEAIEITSDDHVIQYVNPAFERMMGYHKGELLGKELADLPKSDKNRADLLDTINTCIKKGKEWQGVYYARRKSGDSIQQHVKITPVIGQGGKIRHFVSLKKLCCTTDSNKQIHRIHRDSGDNSQTEPHSFRHKSRRKESIDVKSISSRGSDAPSLQNRRYPSMARIHSMTIEAPITKVINIINAAQENSPVTVAEALDRVLEILRTTELYSPQLGTKDEDPHTSDLVGGLMTDGLRRLSGNEYVFTKNVHHSHSHLSMPITINDVPPSIAQLLDNEESWDFNIFELEAVTHKRPLVYLGLKVFSRFGVCEFLNCTETTLRAWLQVIEANYHSSNAYHNSTHAADVLHATAFFLGKERVKGSLDQLDEVAALIAATVHDVDHPGRTNSFLCNAGSELAVLYNDTAVLESHHTALAFQLTVKDTKCNIFKNIDRNHYRTLRQAIIDMVLATEMTKHFEHVNKFVNSINKPLAAESEGSDCECNPTGKNFPENQILIKRMMIKCADVANPCRPLDLCIEWAGRISEEYFAQTDEEKRQGLPVVMPVFDRNTCSIPKSQISFIDYFITDMFDAWDAFAHLPALMQHLADNYKHWKTLDDLKCKTLRLPSDS.

Disordered regions lie at residues Cys-17–Leu-40 and Ala-52–Gly-92. The segment covering Ser-23–Pro-36 has biased composition (polar residues). Low complexity predominate over residues Gly-75 to Cys-90. Positions Ala-247–Gly-318 constitute a PAS domain. The segment at Ile-373–Asn-415 is disordered. Polar residues predominate over residues Ser-402–Asn-415. Ser-497 carries the post-translational modification Phosphoserine. The PDEase domain maps to Thr-519–Lys-855. Catalysis depends on His-595, which acts as the Proton donor. His-599, His-635, and Asp-636 together coordinate a divalent metal cation. Residues Ser-731 and Ser-734 each carry the phosphoserine modification. Asp-761 contributes to the a divalent metal cation binding site.

It belongs to the cyclic nucleotide phosphodiesterase family. PDE8 subfamily. Requires a divalent metal cation as cofactor. In terms of tissue distribution, widely expressed.

It carries out the reaction 3',5'-cyclic AMP + H2O = AMP + H(+). It functions in the pathway purine metabolism; 3',5'-cyclic AMP degradation; AMP from 3',5'-cyclic AMP: step 1/1. In terms of biological role, hydrolyzes the second messenger cAMP, which is a key regulator of many important physiological processes. May be involved in specific signaling in the thyroid gland. The chain is High affinity cAMP-specific and IBMX-insensitive 3',5'-cyclic phosphodiesterase 8B (Pde8b) from Mus musculus (Mouse).